The sequence spans 284 residues: Tropomyosin (284 aa).

The disordered stretch occupies residues 1-38 (MEAIKKKMQAMKLEKDNAVDRAETAEQQSREAALRAEK). Positions 1–284 (MEAIKKKMQA…DQTFSELTGY (284 aa)) form a coiled coil. Basic and acidic residues predominate over residues 12-38 (KLEKDNAVDRAETAEQQSREAALRAEK).

This sequence belongs to the tropomyosin family. In terms of assembly, homodimer.

In terms of biological role, tropomyosin, in association with the troponin complex, plays a central role in the calcium dependent regulation of muscle contraction. This chain is Tropomyosin, found in Rhipicephalus microplus (Cattle tick).